Here is a 1279-residue protein sequence, read N- to C-terminus: ATP-dependent helicase/nuclease subunit A (1279 aa).

A UvrD-like helicase ATP-binding domain is found at 4–499 (TKWTDEQRQA…VKLFKNFRSR (496 aa)). 25–32 (AGAGAGKT) is a binding site for ATP. A UvrD-like helicase C-terminal domain is found at 526–853 (EEALKVGASY…RIMSIHKSKG (328 aa)).

The protein belongs to the helicase family. AddA subfamily. In terms of assembly, heterodimer of AddA and AddB/RexB. It depends on Mg(2+) as a cofactor.

The enzyme catalyses Couples ATP hydrolysis with the unwinding of duplex DNA by translocating in the 3'-5' direction.. It catalyses the reaction ATP + H2O = ADP + phosphate + H(+). The heterodimer acts as both an ATP-dependent DNA helicase and an ATP-dependent, dual-direction single-stranded exonuclease. Recognizes the chi site generating a DNA molecule suitable for the initiation of homologous recombination. The AddA nuclease domain is required for chi fragment generation; this subunit has the helicase and 3' -&gt; 5' nuclease activities. This is ATP-dependent helicase/nuclease subunit A from Clostridium botulinum (strain Langeland / NCTC 10281 / Type F).